Here is a 309-residue protein sequence, read N- to C-terminus: Porphobilinogen deaminase (309 aa).

Residue Cys-240 is modified to S-(dipyrrolylmethanemethyl)cysteine.

It belongs to the HMBS family. In terms of assembly, monomer. Dipyrromethane is required as a cofactor.

It catalyses the reaction 4 porphobilinogen + H2O = hydroxymethylbilane + 4 NH4(+). Its pathway is porphyrin-containing compound metabolism; protoporphyrin-IX biosynthesis; coproporphyrinogen-III from 5-aminolevulinate: step 2/4. In terms of biological role, tetrapolymerization of the monopyrrole PBG into the hydroxymethylbilane pre-uroporphyrinogen in several discrete steps. The sequence is that of Porphobilinogen deaminase from Chromobacterium violaceum (strain ATCC 12472 / DSM 30191 / JCM 1249 / CCUG 213 / NBRC 12614 / NCIMB 9131 / NCTC 9757 / MK).